The following is a 99-amino-acid chain: MKIIKVTVVYALPKIQYICQVDIALGSTVKDAILKSNLLNLTNDVSFHHNRIGIYNKTVHLKFKIKDGDRIEIYRNLTIDPKEWRRNNVFLSKKLKKIY.

Belongs to the UPF0125 (RnfH) family.

The chain is UPF0125 protein BU253 from Buchnera aphidicola subsp. Acyrthosiphon pisum (strain APS) (Acyrthosiphon pisum symbiotic bacterium).